Reading from the N-terminus, the 701-residue chain is Ubiquitin thioesterase zranb1-B (701 aa).

3 consecutive RanBP2-type zinc fingers follow at residues 3-33, 79-108, and 143-173; these read EDGIKWACEYCTFENWPSAIKCTMCRAPRPS, TSSKWSCQICTYLNWPRAIRCTQCLSQRRT, and IKGQHWTCSACTYENCAKAKKCVVCDHPTPN. Cysteine 10, cysteine 13, cysteine 24, cysteine 27, cysteine 85, cysteine 88, cysteine 99, and cysteine 102 together coordinate Zn(2+). Residues 108 to 121 show a composition bias toward polar residues; sequence TRSPTESPQSSGSG. The interval 108-129 is disordered; that stretch reads TRSPTESPQSSGSGLRSIPGPI. Positions 150, 153, 164, and 167 each coordinate Zn(2+). The interval 197-220 is disordered; it reads RWRGGCSSSNSQRRSPPTSKRDSD. Polar residues predominate over residues 202 to 214; the sequence is CSSSNSQRRSPPT. 2 ANK repeats span residues 253–283 and 306–333; these read RKTDWLFLNACVGVVEGDLSAVEAYKTSGGD and YTLVHLSIRFQRQDMLAILLTEVAQHAA. The 161-residue stretch at 425-585 folds into the OTU domain; it reads LYALWNRTAG…RGHFSALVAM (161 aa). The Nucleophile role is filled by cysteine 436. Residue histidine 578 is the Proton acceptor of the active site.

This sequence belongs to the peptidase C64 family.

The protein resides in the cytoplasm. The protein localises to the nucleus. It catalyses the reaction Thiol-dependent hydrolysis of ester, thioester, amide, peptide and isopeptide bonds formed by the C-terminal Gly of ubiquitin (a 76-residue protein attached to proteins as an intracellular targeting signal).. Its function is as follows. Ubiquitin thioesterase, which specifically hydrolyzes 'Lys-29'-linked and 'Lys-33'-linked diubiquitin. Also cleaves 'Lys-63'-linked chains, but with 40-fold less efficiency compared to 'Lys-29'-linked ones. Positive regulator of the Wnt signaling pathway that deubiquitinates apc protein, a negative regulator of Wnt-mediated transcription. Acts as a regulator of autophagy by mediating deubiquitination of pik3c3/vps34, thereby promoting autophagosome maturation. Plays a role in the regulation of cell morphology and cytoskeletal organization. Required in the stress fiber dynamics and cell migration. In Xenopus laevis (African clawed frog), this protein is Ubiquitin thioesterase zranb1-B (zranb1-b).